A 958-amino-acid polypeptide reads, in one-letter code: Coiled-coil domain-containing protein 187 (958 aa).

Over residues 116-132 the composition is skewed to low complexity; sequence SSVSSGRMSGSSGGHES. 4 disordered regions span residues 116 to 160, 345 to 447, 470 to 492, and 510 to 602; these read SSVS…SDPR, ELTR…PRFF, QDISVQKSGSSLKKPSPFSQRPW, and EPSP…KAQA. Polar residues-rich tracts occupy residues 374–398 and 470–491; these read LQSTQDMQGSSKTAWTVTEGKNSSL and QDISVQKSGSSLKKPSPFSQRP. Residues 536-545 are compositionally biased toward low complexity; sequence SSPSSKGKSA. Residues 718–743 adopt a coiled-coil conformation; sequence KQARLQALETMAEALRQRVDILTTKL. The segment at 916 to 958 is disordered; the sequence is EVKKEGLVTPWTTRSCGKGEPADRPWAGWSGGQGGLPWASSTA.

This is Coiled-coil domain-containing protein 187 from Mus musculus (Mouse).